A 261-amino-acid chain; its full sequence is Basic leucine zipper 19 (261 aa).

Disordered regions lie at residues 1–22 (MEDGELDFSNQEVFSSSEMGEL) and 74–100 (ESDEKVSTDDTAESCGKKGEKRPLGNR). The segment covering 8–18 (FSNQEVFSSSE) has biased composition (polar residues). Basic and acidic residues predominate over residues 88 to 100 (CGKKGEKRPLGNR). One can recognise a bZIP domain in the interval 89-155 (GKKGEKRPLG…SRLKCLLVDL (67 aa)). A basic motif region spans residues 90 to 113 (KKGEKRPLGNREAVRKYREKKKAK). Residues 117 to 131 (LEDEVARLRAVNQQL) form a leucine-zipper region. Low complexity predominate over residues 237 to 248 (NGSFSNVNTSVS). Residues 237-261 (NGSFSNVNTSVSNKRKGGHRASRAV) form a disordered region. Over residues 249–261 (NKRKGGHRASRAV) the composition is skewed to basic residues.

The protein localises to the nucleus. In terms of biological role, transcription factor involved in the response to zinc ion deficiency. Binds to the consensus sequence 5'-[AG]TGTCGACA[CT]-3' also called zinc deficiency response element (ZDRE). The ZDRE sequence is conserved in the plant kingdom and present in the promoters of genes that constitute the primary response to zinc deficiency, comprising additional ZIP metal transporter genes. Required for zinc accumulation in roots. Mediates the expression of the zinc transporters ZIP3, ZIP4, ZIP5 and ZIP9 during growth in zinc-deficient conditions. ZIP9 transporter is involved in zinc uptake in roots. This Arabidopsis thaliana (Mouse-ear cress) protein is Basic leucine zipper 19.